The sequence spans 256 residues: Chalcone--flavanone isomerase (256 aa).

Positions 51, 116, and 193 each coordinate substrate. Residues 219–256 (NSTTDLNESENEKLNSNEVSKEEKPLQVEKSAFKEVEV) are disordered. Positions 228–256 (ENEKLNSNEVSKEEKPLQVEKSAFKEVEV) are enriched in basic and acidic residues.

This sequence belongs to the chalcone isomerase family. As to expression, nodules.

It carries out the reaction a chalcone = a flavanone.. It functions in the pathway secondary metabolite biosynthesis; flavonoid biosynthesis. Its function is as follows. Catalyzes the intramolecular cyclization of bicyclic chalcones into tricyclic (S)-flavanones. Responsible for the isomerization of 4,2',4',6'-tetrahydroxychalcone (also termed chalcone) into naringenin. The chain is Chalcone--flavanone isomerase (CHI) from Elaeagnus umbellata (Autumn olive).